A 708-amino-acid polypeptide reads, in one-letter code: DNA-directed RNA polymerase III subunit RPC5 (708 aa).

Positions 146–155 (DAKHREREAA) are enriched in basic and acidic residues. A disordered region spans residues 146-170 (DAKHREREAANEAGDSSQDEAEDDV). Residues Ser-161 and Ser-162 each carry the phosphoserine modification. Lys-171 participates in a covalent cross-link: Glycyl lysine isopeptide (Lys-Gly) (interchain with G-Cter in SUMO2). Ser-192 is subject to Phosphoserine. Residue Tyr-224 is modified to Phosphotyrosine. Residue Lys-432 forms a Glycyl lysine isopeptide (Lys-Gly) (interchain with G-Cter in SUMO2) linkage. Positions 485–552 (QLRVPAVPPG…DSFNGHPPQG (68 aa)) are disordered. A Glycyl lysine isopeptide (Lys-Gly) (interchain with G-Cter in SUMO1); alternate cross-link involves residue Lys-498. Lys-498 participates in a covalent cross-link: Glycyl lysine isopeptide (Lys-Gly) (interchain with G-Cter in SUMO2); alternate. Positions 502–519 (VSEEGEEDEEQEAEEEPM) are enriched in acidic residues. Phosphoserine occurs at positions 503 and 522. The required for Pol III complex stability stretch occupies residues 556–708 (TPVARELKAF…MWYLKGTVQS (153 aa)). A Glycyl lysine isopeptide (Lys-Gly) (interchain with G-Cter in SUMO2) cross-link involves residue Lys-659.

Component of the RNA polymerase III complex consisting of at least 17 subunits: a ten-subunit horseshoe-shaped catalytic core composed of POLR3A/RPC1, POLR3B/RPC2, POLR1C/RPAC1, POLR1D/RPAC2, POLR3K/RPC10, POLR2E/RPABC1, POLR2F/RPABC2, POLR2H/RPABC3, POLR2K/RPABC4 and POLR2L/RPABC5; the stalk composed of two subunits POLR3H/RPC8 and CRCP/RPC9, forming a structural mobile part that protrudes out of the core and functions primarily in transcription initiation; and additional subunits homologous to general transcription factors of the RNA polymerase II machinery, POLR3D/RPC4-POLR3E/RPC5 heterodimer and POLR3/CRPC3-POLR3F/RPC6-POLR3G/RPC7 heterotrimer.

It localises to the nucleus. DNA-dependent RNA polymerase catalyzes the transcription of DNA into RNA using the four ribonucleoside triphosphates as substrates. Specific peripheric component of RNA polymerase III (Pol III) which synthesizes small non-coding RNAs including 5S rRNA, snRNAs, tRNAs and miRNAs from at least 500 distinct genomic loci. Assembles with POLR3D/RPC4 forming a subcomplex that binds the Pol III core. Enables recruitment of Pol III at transcription initiation site and drives transcription initiation from both type 2 and type 3 DNA promoters. Required for efficient transcription termination and reinitiation. Plays a key role in sensing and limiting infection by intracellular bacteria and DNA viruses. Acts as a nuclear and cytosolic DNA sensor involved in innate immune response. Can sense non-self dsDNA that serves as template for transcription into dsRNA. The non-self RNA polymerase III transcripts, such as Epstein-Barr virus-encoded RNAs (EBERs) induce type I interferon and NF-kappa-B through the RIG-I pathway. This Homo sapiens (Human) protein is DNA-directed RNA polymerase III subunit RPC5.